Here is a 35-residue protein sequence, read N- to C-terminus: Ranatuerin-2SPa (35 aa).

A disulfide bond links Cys28 and Cys33.

Expressed by the skin glands.

The protein localises to the secreted. In terms of biological role, antibacterial activity against Gram-positive bacterium S.aureus. Shows no detectable hemolytic activity towards human erythrocytes. In Lithobates septentrionalis (Mink frog), this protein is Ranatuerin-2SPa.